A 342-amino-acid polypeptide reads, in one-letter code: Ribosomal RNA small subunit methyltransferase H (342 aa).

Residues 62–64 (GGH), D82, F108, D129, and Q136 each bind S-adenosyl-L-methionine. The interval 280 to 319 (RHSKGQYPEDENLPMPPKRPRYFSKPKRVGPSKAEISHNP) is disordered. Basic residues predominate over residues 297–309 (KRPRYFSKPKRVG).

It belongs to the methyltransferase superfamily. RsmH family.

It is found in the cytoplasm. The enzyme catalyses cytidine(1402) in 16S rRNA + S-adenosyl-L-methionine = N(4)-methylcytidine(1402) in 16S rRNA + S-adenosyl-L-homocysteine + H(+). Functionally, specifically methylates the N4 position of cytidine in position 1402 (C1402) of 16S rRNA. This is Ribosomal RNA small subunit methyltransferase H from Psychrobacter cryohalolentis (strain ATCC BAA-1226 / DSM 17306 / VKM B-2378 / K5).